The following is a 295-amino-acid chain: Indole-3-glycerol phosphate synthase (295 aa).

This sequence belongs to the TrpC family.

The enzyme catalyses 1-(2-carboxyphenylamino)-1-deoxy-D-ribulose 5-phosphate + H(+) = (1S,2R)-1-C-(indol-3-yl)glycerol 3-phosphate + CO2 + H2O. Its pathway is amino-acid biosynthesis; L-tryptophan biosynthesis; L-tryptophan from chorismate: step 4/5. This chain is Indole-3-glycerol phosphate synthase, found in Prochlorococcus marinus (strain MIT 9215).